The following is a 148-amino-acid chain: ATP synthase epsilon chain (148 aa).

It belongs to the ATPase epsilon chain family. In terms of assembly, F-type ATPases have 2 components, CF(1) - the catalytic core - and CF(0) - the membrane proton channel. CF(1) has five subunits: alpha(3), beta(3), gamma(1), delta(1), epsilon(1). CF(0) has three main subunits: a, b and c.

The protein resides in the cell inner membrane. Its function is as follows. Produces ATP from ADP in the presence of a proton gradient across the membrane. The chain is ATP synthase epsilon chain from Paracoccus denitrificans (strain Pd 1222).